Consider the following 185-residue polypeptide: Ribosome-recycling factor (185 aa).

The protein belongs to the RRF family.

It is found in the cytoplasm. In terms of biological role, responsible for the release of ribosomes from messenger RNA at the termination of protein biosynthesis. May increase the efficiency of translation by recycling ribosomes from one round of translation to another. In Campylobacter hominis (strain ATCC BAA-381 / DSM 21671 / CCUG 45161 / LMG 19568 / NCTC 13146 / CH001A), this protein is Ribosome-recycling factor.